We begin with the raw amino-acid sequence, 321 residues long: MGTNVVRVFVILYLLAVCGCIEYDVDDNVHICTHTDVSHINHTSWYYNDKVIALATEDKTSGYISSFIKRVNISLTCLNISSLRYEDSGTYKGVSHLKDGVIVTTTMNISVKANIIDLTGRVRYLTRNYCEVKIRCEITSFALNGSTTPPHMILGTVDKWKYLPFPTDDYRYVGELKRYISGNPYPTESLALEISSTFNRFTIVKNLNDDEFSCYLFSQNYSFHKMLNARHICESEWKALNNNDNASSMPASHNNLANDLSSMMSQLQNDNDDNNDYSAPMNVDNLIMIVLITMLSIILVIIVVIAAISMYKKSKYRHIDN.

Positions 1–20 (MGTNVVRVFVILYLLAVCGC) are cleaved as a signal peptide. N41, N72, N79, N108, N144, N220, and N245 each carry an N-linked (GlcNAc...) asparagine; by host glycan. The chain crosses the membrane as a helical span at residues 286-306 (LIMIVLITMLSIILVIIVVIA).

This sequence belongs to the orthopoxvirus OPG049 family.

Its subcellular location is the host cell membrane. Functionally, plays a role in the spread of virus to neighboring cells ex vivo. The sequence is that of Protein OPG049 (OPG049) from Vaccinia virus (strain Copenhagen) (VACV).